The primary structure comprises 476 residues: NADP-dependent glyceraldehyde-3-phosphate dehydrogenase (476 aa).

Arginine 103 contributes to the substrate binding site. Serine 151 lines the NADP(+) pocket. Asparagine 154–tyrosine 155 contributes to the substrate binding site. Residues lysine 177, threonine 180, aspartate 215, and glycine 230–leucine 251 contribute to the NADP(+) site. Active-site residues include glutamate 250 and cysteine 284. Residue arginine 283–threonine 285 coordinates substrate. Glutamate 377 contacts NADP(+). Residue arginine 437 participates in substrate binding.

This sequence belongs to the aldehyde dehydrogenase family. Homotetramer.

It carries out the reaction D-glyceraldehyde 3-phosphate + NADP(+) + H2O = (2R)-3-phosphoglycerate + NADPH + 2 H(+). In terms of biological role, catalyzes the irreversible NADP-dependent oxidation of glyceraldehyde-3-phosphate to 3-phosphoglycerate. Is not able to use NAD instead of NADP. May play an important role in NADPH production in S.equinus. The chain is NADP-dependent glyceraldehyde-3-phosphate dehydrogenase (gapN) from Streptococcus equinus (Streptococcus bovis).